A 314-amino-acid chain; its full sequence is Malate dehydrogenase (314 aa).

Residues 11–16 and Asp-35 contribute to the NAD(+) site; that span reads GSGNIG. Positions 84 and 90 each coordinate substrate. Residues Asn-97 and 120-122 contribute to the NAD(+) site; that span reads ITN. Substrate-binding residues include Asn-122 and Arg-153. Catalysis depends on His-177, which acts as the Proton acceptor.

It belongs to the LDH/MDH superfamily. MDH type 3 family.

The catalysed reaction is (S)-malate + NAD(+) = oxaloacetate + NADH + H(+). In terms of biological role, catalyzes the reversible oxidation of malate to oxaloacetate. In Rickettsia africae (strain ESF-5), this protein is Malate dehydrogenase.